The chain runs to 469 residues: Putative arginine/ornithine antiporter (469 aa).

Transmembrane regions (helical) follow at residues Gly8–Leu28, Ala44–Ile64, Ala90–Ile110, Leu144–Ile164, Val179–Gly199, Ile213–Ile233, Ile254–Val274, Val301–Leu321, Ser347–Ile367, Phe375–Ile395, Asp417–Ala437, and Leu439–Val459.

Belongs to the amino acid-polyamine-organocation (APC) superfamily. Basic amino acid/polyamine antiporter (APA) (TC 2.A.3.2) family.

The protein resides in the cell membrane. It catalyses the reaction L-ornithine(in) + L-arginine(out) = L-ornithine(out) + L-arginine(in). In terms of biological role, catalyzes electroneutral exchange between L-arginine and L-ornithine. In Bacillus subtilis (strain 168), this protein is Putative arginine/ornithine antiporter (yvsH).